The sequence spans 208 residues: Ras-related protein RABH1b (208 aa).

16 to 23 (GDQSVGKT) contributes to the GTP binding site. Residues 38–46 (YQATIGIDF) carry the Effector region motif. Residues 64 to 68 (DTAGQ), 122 to 125 (NKTD), and 152 to 153 (SA) each bind GTP. Residues Cys206 and Cys208 are each lipidated (S-geranylgeranyl cysteine). The residue at position 208 (Cys208) is a Cysteine methyl ester.

It belongs to the small GTPase superfamily. Rab family. Interacts with the C-terminus of GC5, but not with GC3. Expressed in roots, stems, leaves and flowers.

Its subcellular location is the golgi apparatus membrane. The protein resides in the cytoplasm. It is found in the cytosol. Protein transport. Regulator of membrane traffic from the Golgi apparatus towards the endoplasmic reticulum (ER). Binds GTP and GDP and possesses intrinsic GTPase activity. This is Ras-related protein RABH1b (RABH1B) from Arabidopsis thaliana (Mouse-ear cress).